The primary structure comprises 708 residues: MEDSDSNTDKKFFFKKRRIDSYNYSDEEDNNSSMNSDMTYTNDALKTSSGNAPTISKLTKTYGIGAKLLSSMGYVAGKGLGKDGSGITTPIETQSRPMHNAGLGMFSNTNSSNYHSENEDYLSSEDEVVEGIEQVKFNKTSTEVLGEALLNDSGDMTIVRTLRELRLAGVQLPESILKELDPLNAVPKPKKDVVVEILQELLGIEKSLEAIRQRTSPLEVQVKEYYGQERLLSELEVTLRDESKHVSLYDKIGAILKLSDDELIDRLTSCLLRKELLIEFDLDHLEKPNDILDELTQIIELLAYRMDTTSKFLNRTQTTIFKVIYPKLKKFWEGFDMTKSKIDSAITLLLDFQQVLSFIGCKEHIMEEFVYPKLLQELDNWELHDEVDHVSPRIWVLDFMVLIDDKIKDTIVDKIEAKFFAYCKNWYHRESFCITNSDIIFIKELICERRYYKILCKEFLPKFLDELWERHNDPIYELEDWKEKQEWKEKDSGFFYFMKKLRSYTHYFHPKQYELMMRGTFNNINKILYQWHLYSTVEDLHKSKWWLNWLMNTVFEHSLPTEIELSEIRKSYNIFAMSHRYHLDKSTLDEDFDLRQGLRNLMETQVIDDISQSEQEPTYTVQNIPLGKVSSSFKDVVEDYCLEKGYLISKIPNRYTQLPYGRDQDCIVPLFEIRNGKKKMEVALKHDILWVEDSSGTFKPIYLWALDL.

The 48-residue stretch at 61–108 folds into the G-patch domain; it reads TYGIGAKLLSSMGYVAGKGLGKDGSGITTPIETQSRPMHNAGLGMFSN.

Component of the NTR complex (NTC-related complex), composed of NTR1, NTR2 and PRP43. Interacts with CLF1 and NTR2. Interacts with PRP43 and PRP45.

The protein localises to the cytoplasm. It localises to the nucleus. Its function is as follows. Involved in pre-mRNA splicing and spliceosome disassembly. Promotes release of excised lariat intron from the spliceosome by acting as a receptor for PRP43. This targeting of PRP43 leads to disassembly of the spliceosome with the separation of the U2, U5, U6 snRNPs and the NTC complex. In Saccharomyces cerevisiae (strain ATCC 204508 / S288c) (Baker's yeast), this protein is Pre-mRNA-splicing factor SPP382 (SPP382).